We begin with the raw amino-acid sequence, 380 residues long: Ribosomal RNA large subunit methyltransferase G (380 aa).

It belongs to the methyltransferase superfamily. RlmG family.

It is found in the cytoplasm. It carries out the reaction guanosine(1835) in 23S rRNA + S-adenosyl-L-methionine = N(2)-methylguanosine(1835) in 23S rRNA + S-adenosyl-L-homocysteine + H(+). Its function is as follows. Specifically methylates the guanine in position 1835 (m2G1835) of 23S rRNA. The protein is Ribosomal RNA large subunit methyltransferase G of Streptomyces avermitilis (strain ATCC 31267 / DSM 46492 / JCM 5070 / NBRC 14893 / NCIMB 12804 / NRRL 8165 / MA-4680).